The primary structure comprises 429 residues: U3 small nucleolar RNA-associated protein 18 homolog (429 aa).

WD repeat units lie at residues 117–156 (RYTR…KKDR), 295–336 (TDDG…NSTN), 345–386 (NLVT…TFKN), and 392–428 (GKVT…HFTD).

This sequence belongs to the WD repeat UTP18 family.

The protein localises to the nucleus. It localises to the nucleolus. In terms of biological role, involved in nucleolar processing of pre-18S ribosomal RNA. The chain is U3 small nucleolar RNA-associated protein 18 homolog from Caenorhabditis elegans.